Reading from the N-terminus, the 196-residue chain is Imidazoleglycerol-phosphate dehydratase (196 aa).

It belongs to the imidazoleglycerol-phosphate dehydratase family.

It localises to the cytoplasm. The catalysed reaction is D-erythro-1-(imidazol-4-yl)glycerol 3-phosphate = 3-(imidazol-4-yl)-2-oxopropyl phosphate + H2O. It participates in amino-acid biosynthesis; L-histidine biosynthesis; L-histidine from 5-phospho-alpha-D-ribose 1-diphosphate: step 6/9. The protein is Imidazoleglycerol-phosphate dehydratase of Dehalococcoides mccartyi (strain CBDB1).